A 314-amino-acid polypeptide reads, in one-letter code: Porphobilinogen deaminase (314 aa).

S-(dipyrrolylmethanemethyl)cysteine is present on Cys-242.

This sequence belongs to the HMBS family. As to quaternary structure, monomer. Dipyrromethane serves as cofactor.

It catalyses the reaction 4 porphobilinogen + H2O = hydroxymethylbilane + 4 NH4(+). Its pathway is porphyrin-containing compound metabolism; protoporphyrin-IX biosynthesis; coproporphyrinogen-III from 5-aminolevulinate: step 2/4. Functionally, tetrapolymerization of the monopyrrole PBG into the hydroxymethylbilane pre-uroporphyrinogen in several discrete steps. This is Porphobilinogen deaminase (hemC) from Buchnera aphidicola subsp. Acyrthosiphon pisum (strain APS) (Acyrthosiphon pisum symbiotic bacterium).